The following is a 191-amino-acid chain: Fe/S biogenesis protein NfuA (191 aa).

2 residues coordinate [4Fe-4S] cluster: Cys149 and Cys152.

The protein belongs to the NfuA family. In terms of assembly, homodimer. Requires [4Fe-4S] cluster as cofactor.

Its function is as follows. Involved in iron-sulfur cluster biogenesis. Binds a 4Fe-4S cluster, can transfer this cluster to apoproteins, and thereby intervenes in the maturation of Fe/S proteins. Could also act as a scaffold/chaperone for damaged Fe/S proteins. This chain is Fe/S biogenesis protein NfuA, found in Yersinia pseudotuberculosis serotype O:1b (strain IP 31758).